The sequence spans 318 residues: Melanocyte-stimulating hormone receptor (318 aa).

The Extracellular portion of the chain corresponds to 1–37 (MPMQGAQRKLLGSLNSTPTATSNLGLAANRTGAPCLE). Asn29 is a glycosylation site (N-linked (GlcNAc...) asparagine). A helical membrane pass occupies residues 38 to 63 (LPIPNGLFLSLGLVSLVENVLVVAAI). Residues 64-72 (AKNRNLHSS) are Cytoplasmic-facing. The helical transmembrane segment at 73–93 (MYCFICCLALSDLLVSGSNML) threads the bilayer. Residues 94 to 118 (ETAVILLLEAGVLATRASVVQQLHN) are Extracellular-facing. The chain crosses the membrane as a helical span at residues 119–140 (TIDVLTCSSMLCSLCFLGAIAV). Topologically, residues 141-163 (DRYISIFYALRYHSIMTLPRAQR) are cytoplasmic. Residues 164–183 (AVAAIWVASVLSSTLFITYY) form a helical membrane-spanning segment. Over 184–191 (DHAAVLLC) the chain is Extracellular. A helical transmembrane segment spans residues 192-211 (LMVFFLAMLVLMAVLYVHML). The Cytoplasmic segment spans residues 212 to 240 (ARARQHAQGIIRLHKRQPPAHKGFGLRGA). Residues 241 to 266 (ATLTILLGIFFLCWGPFFLCLTLVVF) traverse the membrane as a helical segment. At 267–279 (CPQHLTCNCIFKN) the chain is on the extracellular side. The helical transmembrane segment at 280-300 (FKVFLTLIICNTIIDPLIYAF) threads the bilayer. Topologically, residues 301–317 (RSQELRRMLKEVLGRGR) are cytoplasmic.

Belongs to the G-protein coupled receptor 1 family. In terms of assembly, interacts with MGRN1, but does not undergo MGRN1-mediated ubiquitination; this interaction competes with GNAS-binding and thus inhibits agonist-induced cAMP production. Interacts with OPN3; the interaction results in a decrease in MC1R-mediated cAMP signaling and ultimately a decrease in melanin production in melanocytes.

It is found in the cell membrane. Receptor for MSH (alpha, beta and gamma) and ACTH. The activity of this receptor is mediated by G proteins which activate adenylate cyclase. Mediates melanogenesis, the production of eumelanin (black/brown) and phaeomelanin (red/yellow), via regulation of cAMP signaling in melanocytes. The polypeptide is Melanocyte-stimulating hormone receptor (MC1R) (Leontopithecus rosalia (Golden lion tamarin)).